Here is a 754-residue protein sequence, read N- to C-terminus: Neprilysin-1 (754 aa).

The helical; Signal-anchor for type II membrane protein transmembrane segment at 5 to 27 (FGPPIVFLISCYALILCGTVDAL) threads the bilayer. 7 N-linked (GlcNAc...) asparagine glycosylation sites follow: Asn38, Asn81, Asn132, Asn217, Asn273, Asn303, and Asn441. One can recognise a Peptidase M13 domain in the interval 63–754 (VGDSEGYQEA…MNPTKRCVVW (692 aa)). 4 disulfides stabilise this stretch: Cys87-Cys739, Cys95-Cys699, Cys151-Cys414, and Cys624-Cys751. Position 587 (His587) interacts with Zn(2+). Glu588 is an active-site residue. Position 591 (His591) interacts with Zn(2+). N-linked (GlcNAc...) asparagine glycosylation is present at Asn612. Position 649 (Glu649) interacts with Zn(2+). Asp653 serves as the catalytic Proton donor.

This sequence belongs to the peptidase M13 family. The cofactor is Zn(2+). Specifically expressed in pharyngeal cells and a single head neuron.

It localises to the membrane. Its function is as follows. Probable cell surface protease. Required to control the neuronal innervation of pharyngeal pumping. The chain is Neprilysin-1 (nep-1) from Caenorhabditis elegans.